We begin with the raw amino-acid sequence, 327 residues long: Cobalamin biosynthesis protein CobD (327 aa).

The next 4 helical transmembrane spans lie at 61–78, 80–102, 160–182, and 300–322; these read MWLTVGLVAACIFAGLVI, SILPHAGTAGAIAEVVIVAILLA, GIVAPAFWFLVGGLPGLFAYKFI, and AALVLFWSTMSLMTGLVIAASLV.

Belongs to the CobD/CbiB family.

It is found in the cell membrane. It participates in cofactor biosynthesis; adenosylcobalamin biosynthesis. Its function is as follows. Converts cobyric acid to cobinamide by the addition of aminopropanol on the F carboxylic group. The polypeptide is Cobalamin biosynthesis protein CobD (Brucella melitensis biotype 1 (strain ATCC 23456 / CCUG 17765 / NCTC 10094 / 16M)).